Here is a 330-residue protein sequence, read N- to C-terminus: L-asparaginase (330 aa).

The 327-residue stretch at 4–330 folds into the Asparaginase/glutaminase domain; that stretch reads PQVTILATGG…EAIQKIFSTY (327 aa). The active-site O-isoaspartyl threonine intermediate is the Thr14. Residue 93–94 coordinates substrate; it reads TD.

Belongs to the asparaginase 1 family. As to quaternary structure, homotetramer.

The protein resides in the cytoplasm. It carries out the reaction L-asparagine + H2O = L-aspartate + NH4(+). This is L-asparaginase (ansA) from Wolinella succinogenes (strain ATCC 29543 / DSM 1740 / CCUG 13145 / JCM 31913 / LMG 7466 / NCTC 11488 / FDC 602W) (Vibrio succinogenes).